A 127-amino-acid chain; its full sequence is Thioredoxin domain-containing protein 8 (127 aa).

The region spanning 2 to 127 (VQKIKSMREF…KLEEKIQELM (126 aa)) is the Thioredoxin domain. A disulfide bridge connects residues Cys-32 and Cys-35.

It belongs to the thioredoxin family. In terms of tissue distribution, testis-specific. Expressed in spermatozoa, sperm tail, elongated and round spermatids.

Its subcellular location is the cytoplasm. The protein resides in the golgi apparatus. Its function is as follows. May be required for post-translational modifications of proteins required for acrosomal biogenesis. May act by reducing disulfide bonds within the sperm. This chain is Thioredoxin domain-containing protein 8 (Txndc8), found in Rattus norvegicus (Rat).